Consider the following 79-residue polypeptide: Sec-independent protein translocase protein TatA (79 aa).

A helical membrane pass occupies residues 1 to 21 (MGGWSSPSHWLIILLIVVLLF). Residues 52–61 (KNTQKIEENK) show a composition bias toward basic and acidic residues. Residues 52-79 (KNTQKIEENKNTTNNTSADASIDKTKKA) are disordered.

It belongs to the TatA/E family. In terms of assembly, the Tat system comprises two distinct complexes: a TatABC complex, containing multiple copies of TatA, TatB and TatC subunits, and a separate TatA complex, containing only TatA subunits. Substrates initially bind to the TatABC complex, which probably triggers association of the separate TatA complex to form the active translocon.

Its subcellular location is the cell inner membrane. Functionally, part of the twin-arginine translocation (Tat) system that transports large folded proteins containing a characteristic twin-arginine motif in their signal peptide across membranes. TatA could form the protein-conducting channel of the Tat system. In Campylobacter jejuni subsp. jejuni serotype O:6 (strain 81116 / NCTC 11828), this protein is Sec-independent protein translocase protein TatA.